The sequence spans 64 residues: MATKTVRIEQIGSPIRREASQRATLIGLKLNKLHRVSELEDTPSVRGMIRKVAHLVRVLDDAAA.

It belongs to the universal ribosomal protein uL30 family. In terms of assembly, part of the 50S ribosomal subunit.

The chain is Large ribosomal subunit protein uL30 from Methylorubrum populi (strain ATCC BAA-705 / NCIMB 13946 / BJ001) (Methylobacterium populi).